A 319-amino-acid chain; its full sequence is ATP-dependent 6-phosphofructokinase (319 aa).

ATP-binding positions include Gly10, 71-72, and 101-104; these read RS and GDGS. Asp102 contributes to the Mg(2+) binding site. 125-127 provides a ligand contact to substrate; sequence TID. Asp127 functions as the Proton acceptor in the catalytic mechanism. Arg154 contacts ADP. Substrate contacts are provided by residues Arg162 and 169 to 171; that span reads MGR. Residue 185-187 participates in ADP binding; that stretch reads GAE. Substrate is bound by residues Glu223, Arg244, and 250–253; that span reads HVQR.

It belongs to the phosphofructokinase type A (PFKA) family. ATP-dependent PFK group I subfamily. Prokaryotic clade 'B1' sub-subfamily. Homotetramer. Mg(2+) serves as cofactor.

Its subcellular location is the cytoplasm. It catalyses the reaction beta-D-fructose 6-phosphate + ATP = beta-D-fructose 1,6-bisphosphate + ADP + H(+). It participates in carbohydrate degradation; glycolysis; D-glyceraldehyde 3-phosphate and glycerone phosphate from D-glucose: step 3/4. With respect to regulation, allosterically activated by ADP and other diphosphonucleosides, and allosterically inhibited by phosphoenolpyruvate. Catalyzes the phosphorylation of D-fructose 6-phosphate to fructose 1,6-bisphosphate by ATP, the first committing step of glycolysis. This Wolinella succinogenes (strain ATCC 29543 / DSM 1740 / CCUG 13145 / JCM 31913 / LMG 7466 / NCTC 11488 / FDC 602W) (Vibrio succinogenes) protein is ATP-dependent 6-phosphofructokinase.